Consider the following 225-residue polypeptide: MGIKDWPDGEGPRDRLIKFGVSQLSDAEVLAVLLRNGSQGLNAVELARNLINEFGGLREVLAASQSQVCRLSGMGPVKFAQLRAAVELSSRVSAQNLKRGKILSDPDLTRDYLMRQLRDRAYEVFAILLLDSQHRVIQFVELFRGTIDSASVYPRDVVSLVLEKKAAAVIVCHNHPSGVAEPSHADRRITERLKCALSTIDVSLLDHMVVGDREIVSFAERGWID.

Residues 102 to 224 (ILSDPDLTRD…IVSFAERGWI (123 aa)) enclose the MPN domain. Zn(2+)-binding residues include histidine 173, histidine 175, and aspartate 186. The JAMM motif signature appears at 173-186 (HNHPSGVAEPSHAD).

It belongs to the UPF0758 family.

This chain is UPF0758 protein Swoo_4561, found in Shewanella woodyi (strain ATCC 51908 / MS32).